Consider the following 145-residue polypeptide: Large ribosomal subunit protein bL35c (145 aa).

Residues 1–56 constitute a chloroplast transit peptide; that stretch reads MASLSMASVNVSFCHPLRSSSPKVSLRSSVHFATSLSSSHSISGLRAVLPLKISTV.

This sequence belongs to the bacterial ribosomal protein bL35 family. Part of the 50S ribosomal subunit.

Its subcellular location is the plastid. It is found in the chloroplast. In Arabidopsis thaliana (Mouse-ear cress), this protein is Large ribosomal subunit protein bL35c.